Here is a 358-residue protein sequence, read N- to C-terminus: Src kinase-associated phosphoprotein 2 (358 aa).

Phosphoserine is present on residues serine 5 and serine 6. Positions 62–88 are disordered; sequence ESQDKGDAEDGEEYDDPFAGPPDTISL. Tyrosine 75 carries the post-translational modification Phosphotyrosine. 2 positions are modified to phosphoserine: serine 87 and serine 90. In terms of domain architecture, PH spans 116–219; it reads FVLKAGYLEK…WVQQLNFVLQ (104 aa). Phosphotyrosine is present on residues tyrosine 151 and tyrosine 197. Serine 223 bears the Phosphoserine mark. Residues 232 to 254 form a disordered region; it reads ERGELYDDVDHPLPSSSPTRSLP. Residues 243-253 are compositionally biased toward low complexity; sequence PLPSSSPTRSL. At tyrosine 260 the chain carries Phosphotyrosine. A phosphoserine mark is found at serine 282 and serine 285. An SH3 domain is found at 296–357; sequence NYANFYQGLW…PKAYVMEMYD (62 aa).

The protein belongs to the SKAP family. Interacts with FYB1, which is required for SKAP2 protein stability. Interacts with PTPNS1. Part of a complex consisting of SKAP2, FYB1 and PTPNS1. Part of a complex consisting of SKAP2, FYB1 and LILRB3. Interacts with LAT, GRB2, PTK2B and PRAM1. May interact with actin. May interact with FYN, HCK and LYN. Interacts with FASLG.

It localises to the cytoplasm. In terms of biological role, may be involved in B-cell and macrophage adhesion processes. In B-cells, may act by coupling the B-cell receptor (BCR) to integrin activation. May play a role in src signaling pathway. The protein is Src kinase-associated phosphoprotein 2 (SKAP2) of Bos taurus (Bovine).